Reading from the N-terminus, the 512-residue chain is Kelch repeat protein C2 (512 aa).

The region spanning 2–67 (ESVIFSINGE…IRWKKINITI (66 aa)) is the BTB domain. The BACK domain occupies 102–176 (CIRMFNFSKR…LLKWIHKNPN (75 aa)). 6 Kelch repeats span residues 216–261 (IKHN…LHNC), 262–307 (LYII…VNDG), 309–354 (LYVI…FVND), 356–403 (IYVM…EYDG), 405–449 (IYVI…SCGD), and 452–498 (LIIA…THKS).

The protein belongs to the poxviruses Kelch family.

This is Kelch repeat protein C2 from Vaccinia virus (strain Western Reserve) (VACV).